Consider the following 289-residue polypeptide: Phosphate import ATP-binding protein PstB (289 aa).

The segment at 1–37 is disordered; it reads MRSIDRPGGQAARPTIGSVAGASNTRTRDARSLPDTP. Residues 41–284 form the ABC transporter domain; the sequence is AAAENFSFYY…PVRRETEDYI (244 aa). 73 to 80 serves as a coordination point for ATP; that stretch reads GPSGCGKS.

It belongs to the ABC transporter superfamily. Phosphate importer (TC 3.A.1.7) family. The complex is composed of two ATP-binding proteins (PstB), two transmembrane proteins (PstC and PstA) and a solute-binding protein (PstS).

The protein localises to the cell inner membrane. It carries out the reaction phosphate(out) + ATP + H2O = ADP + 2 phosphate(in) + H(+). Functionally, part of the ABC transporter complex PstSACB involved in phosphate import. Responsible for energy coupling to the transport system. The chain is Phosphate import ATP-binding protein PstB from Aromatoleum aromaticum (strain DSM 19018 / LMG 30748 / EbN1) (Azoarcus sp. (strain EbN1)).